A 1009-amino-acid chain; its full sequence is Translation initiation factor IF-2 (1009 aa).

Residues 1 to 415 (MSDENENGRP…EREKEKRRGG (415 aa)) form a disordered region. Basic and acidic residues predominate over residues 94-110 (EELRARQRVVDAAREAQ). The segment covering 111–121 (ARQVAEQAAAE) has biased composition (low complexity). A compositionally biased stretch (basic and acidic residues) spans 122-136 (ARARAAQEAAQREAA). Low complexity predominate over residues 137 to 146 (AKAAAERAAA). A compositionally biased stretch (pro residues) spans 147–174 (APPPVAQAPAAPAPAAPVTPPPAAPQAP). Over residues 175 to 189 (RPVAQAPVAPSAPRQ) the composition is skewed to low complexity. Composition is skewed to basic and acidic residues over residues 208–218 (EPSRDRRDDRP) and 251–287 (PRPE…RPQG). A compositionally biased stretch (pro residues) spans 311–320 (GGPPRGPRPG). 2 stretches are compositionally biased toward basic and acidic residues: residues 346-358 (MDRR…DRRK) and 403-415 (RARE…RRGG). A tr-type G domain is found at 505–675 (LRPPVVTIMG…LLQAEVLDLK (171 aa)). The G1 stretch occupies residues 514 to 521 (GHVDHGKT). 514-521 (GHVDHGKT) is a GTP binding site. Residues 539-543 (GITQH) are G2. Residues 561–564 (DTPG) are G3. Residues 561–565 (DTPGH) and 615–618 (NKMD) contribute to the GTP site. The interval 615–618 (NKMD) is G4. The interval 651–653 (SAK) is G5.

The protein belongs to the TRAFAC class translation factor GTPase superfamily. Classic translation factor GTPase family. IF-2 subfamily.

The protein resides in the cytoplasm. Its function is as follows. One of the essential components for the initiation of protein synthesis. Protects formylmethionyl-tRNA from spontaneous hydrolysis and promotes its binding to the 30S ribosomal subunits. Also involved in the hydrolysis of GTP during the formation of the 70S ribosomal complex. In Caulobacter vibrioides (strain ATCC 19089 / CIP 103742 / CB 15) (Caulobacter crescentus), this protein is Translation initiation factor IF-2.